The sequence spans 208 residues: Uracil phosphoribosyltransferase (208 aa).

5-phospho-alpha-D-ribose 1-diphosphate contacts are provided by residues Arg78, Arg103, and 130–138; that span reads DPMLATGGS. Uracil-binding positions include Ile193 and 198–200; that span reads GDA. Residue Asp199 participates in 5-phospho-alpha-D-ribose 1-diphosphate binding.

This sequence belongs to the UPRTase family. Mg(2+) serves as cofactor.

It carries out the reaction UMP + diphosphate = 5-phospho-alpha-D-ribose 1-diphosphate + uracil. Its pathway is pyrimidine metabolism; UMP biosynthesis via salvage pathway; UMP from uracil: step 1/1. With respect to regulation, allosterically activated by GTP. In terms of biological role, catalyzes the conversion of uracil and 5-phospho-alpha-D-ribose 1-diphosphate (PRPP) to UMP and diphosphate. This Pasteurella multocida (strain Pm70) protein is Uracil phosphoribosyltransferase.